A 248-amino-acid chain; its full sequence is tRNA (guanine-N(1)-)-methyltransferase (248 aa).

S-adenosyl-L-methionine is bound by residues G113 and 133-138 (IGDYVL).

The protein belongs to the RNA methyltransferase TrmD family. In terms of assembly, homodimer.

The protein localises to the cytoplasm. It catalyses the reaction guanosine(37) in tRNA + S-adenosyl-L-methionine = N(1)-methylguanosine(37) in tRNA + S-adenosyl-L-homocysteine + H(+). Functionally, specifically methylates guanosine-37 in various tRNAs. The protein is tRNA (guanine-N(1)-)-methyltransferase of Shewanella piezotolerans (strain WP3 / JCM 13877).